Consider the following 378-residue polypeptide: tRNA-specific 2-thiouridylase MnmA (378 aa).

ATP-binding positions include 9–16 (GVSGGVDS) and M35. The segment at 94-96 (NPD) is interaction with target base in tRNA. The active-site Nucleophile is the C99. C99 and C195 are joined by a disulfide. G123 contacts ATP. The tract at residues 145–147 (KDQ) is interaction with tRNA. The active-site Cysteine persulfide intermediate is the C195. The tract at residues 307–308 (RY) is interaction with tRNA.

The protein belongs to the MnmA/TRMU family.

The protein resides in the cytoplasm. It carries out the reaction S-sulfanyl-L-cysteinyl-[protein] + uridine(34) in tRNA + AH2 + ATP = 2-thiouridine(34) in tRNA + L-cysteinyl-[protein] + A + AMP + diphosphate + H(+). Catalyzes the 2-thiolation of uridine at the wobble position (U34) of tRNA, leading to the formation of s(2)U34. In Xanthomonas axonopodis pv. citri (strain 306), this protein is tRNA-specific 2-thiouridylase MnmA.